Reading from the N-terminus, the 351-residue chain is Type II methyltransferase M.DsaV (351 aa).

Residues 6-312 (LKFIDLFAGI…QKMLSYIDLT (307 aa)) form the SAM-dependent MTase C5-type domain. The active site involves Cys75.

It belongs to the class I-like SAM-binding methyltransferase superfamily. C5-methyltransferase family.

The catalysed reaction is a 2'-deoxycytidine in DNA + S-adenosyl-L-methionine = a 5-methyl-2'-deoxycytidine in DNA + S-adenosyl-L-homocysteine + H(+). A methylase, recognizes the double-stranded sequence 5'-CCNGG-3', methylates C-2 on both strands, and protects the DNA from cleavage by the DsaV endonuclease. The chain is Type II methyltransferase M.DsaV from Dactylococcopsis salina (Myxobaktron salinum).